A 1306-amino-acid polypeptide reads, in one-letter code: Synergin gamma (1306 aa).

Positions 113 to 153 form a coiled coil; it reads MQKQFAEEQQKRFEQQQKLLEEERKRRQFEEQKQKLRLLSS. Disordered stretches follow at residues 176–196 and 252–285; these read GFSRDAKMHPTPASHPKKQGP and SGPASAEAEKTSDQTLSKEESGVGVFPSQDPAQS. A compositionally biased stretch (basic and acidic residues) spans 258 to 272; the sequence is EAEKTSDQTLSKEES. In terms of domain architecture, EH spans 293-404; it reads NESLVPDAYK…TPVSQPTAMP (112 aa). Positions 455-459 match the DFXDF motif 1 motif; that stretch reads DFQDF. The tract at residues 460–494 is disordered; sequence QDASKSGSIDDSFTDFQEMPASSKTSNSQHGNSAP. S471 bears the Phosphoserine mark. K509 is subject to N6-acetyllysine. The segment at 514–778 is interaction with AP1G1; that stretch reads KGISTDKPSE…ADFHSSKFSS (265 aa). A disordered region spans residues 559–601; that stretch reads STGTDDGFTDFKTADSVSPLEPPTKDTFPSAFASGAAQQTQTQ. S576 bears the Phosphoserine mark. The segment at 661–673 is interaction with AP1G1, AP1G2 and GGA1; that stretch reads LADDFGEFNLFGE. The DFXDF motif 2 motif lies at 685–689; sequence DFADF. Residues 697–730 form a disordered region; the sequence is ISSEPKASDKYEALREEVSPSPLSSSTVEGAQHP. Residues 702 to 714 show a composition bias toward basic and acidic residues; sequence KASDKYEALREEV. Position 715 is a phosphoserine (S715). Position 736 is an N6-acetyllysine (K736). Phosphoserine occurs at positions 744 and 764. Positions 767 to 771 match the DFXDF motif 3 motif; that stretch reads DFADF. Residues S804, S844, S847, S901, S911, S927, S974, S998, S1065, S1067, S1079, and S1090 each carry the phosphoserine modification. Disordered regions lie at residues 986–1016 and 1065–1090; these read PTVDRSQETSCPSPASSVASHETPKEGADDF and SLSLGDKEISRSSPSPALEQPFRDRS. The segment covering 993–1005 has biased composition (polar residues); sequence ETSCPSPASSVAS. T1092 is subject to Phosphothreonine.

Self-associates. Interacts with GGA1 (via GAE domain). Interacts with GGA2 and GGA3. Interacts with AP1G1 (via GAE domain), a subunit of adapter protein complex AP-1. Interacts with AP1G2 (via GAE domain) a subunit of adapter protein complex AP-1. Component of the aftiphilin/p200/gamma-synergin complex, at least composed of AFTPH/aftiphilin, HEATR5B/p200a and SYNRG/gamma-synergin, which plays a role in the AP1G1/AP-1-mediated trafficking of transferrin from early to recycling endosomes. Within the complex interacts with AFTPH/aftiphilin and HEATR5B/p200a; the interactions are direct. Interacts (via EH domain) with SCAMP1.

It localises to the cytoplasm. The protein localises to the cytosol. The protein resides in the golgi apparatus. It is found in the trans-Golgi network membrane. Its subcellular location is the perinuclear region. It localises to the cytoplasmic vesicle. The protein localises to the clathrin-coated vesicle. Plays a role in endocytosis and/or membrane trafficking at the trans-Golgi network (TGN). May act by linking the adapter protein complex AP-1 to other proteins. Component of clathrin-coated vesicles. Component of the aftiphilin/p200/gamma-synergin complex, which plays roles in AP1G1/AP-1-mediated protein trafficking including the trafficking of transferrin from early to recycling endosomes, and the membrane trafficking of furin and the lysosomal enzyme cathepsin D between the trans-Golgi network (TGN) and endosomes. The sequence is that of Synergin gamma (Synrg) from Mus musculus (Mouse).